Consider the following 603-residue polypeptide: Methylenetetrahydrofolate reductase 1 (603 aa).

E21 (proton donor/acceptor) is an active-site residue. Residues 21-26 (EFFPPK) and 53-54 (TW) contribute to the NAD(+) site. Residues 53-54 (TW), H82, 112-114 (RGD), 130-131 (YA), Y153, and K173 contribute to the FAD site. D114 provides a ligand contact to substrate. Q184 and Y276 together coordinate substrate. S355 is subject to Phosphoserine.

This sequence belongs to the methylenetetrahydrofolate reductase family. FAD is required as a cofactor.

The enzyme catalyses (6S)-5-methyl-5,6,7,8-tetrahydrofolate + NADP(+) = (6R)-5,10-methylene-5,6,7,8-tetrahydrofolate + NADPH + H(+). It catalyses the reaction (6S)-5-methyl-5,6,7,8-tetrahydrofolate + NAD(+) = (6R)-5,10-methylene-5,6,7,8-tetrahydrofolate + NADH + H(+). It functions in the pathway one-carbon metabolism; tetrahydrofolate interconversion. Functionally, major methylenetetrahydrofolate reductase required to generate the methyl groups necessary for methionine synthetase to convert homocysteine to methionine. Performs 80 to 85 percent of the total methylenetetrahydrofolate reductase activity of the cells. The protein is Methylenetetrahydrofolate reductase 1 (met9) of Schizosaccharomyces pombe (strain 972 / ATCC 24843) (Fission yeast).